Reading from the N-terminus, the 439-residue chain is Nitroalkane oxidase (439 aa).

Residues 131–134 (LMHS), 139–141 (TAN), 169–171 (WPS), arginine 304, 313–314 (HQ), 375–379 (KAVGM), and 400–404 (LFDGG) each bind FAD. Aspartate 402 acts as the Proton acceptor in catalysis.

This sequence belongs to the acyl-CoA dehydrogenase family. As to quaternary structure, homotetramer. FAD is required as a cofactor.

It carries out the reaction a primary nitroalkane + O2 + H2O = an aldehyde + nitrite + H2O2 + H(+). The enzyme catalyses a secondary nitroalkane + O2 + H2O = a ketone + nitrite + H2O2 + H(+). Its activity is regulated as follows. Strongly inhibited by mercury chloride and KCN. Functionally, catalyzes the oxidative denitrification of neutral nitroalkanes, including 3-nitro-2-pentanol, 1-nitropropane, 2-nitropropane, nitroethane and nitrocyclohexane, and may thereby protect the organism against toxic compounds. Has no detectable acyl-CoA dehydrogenase activity. This is Nitroalkane oxidase from Fusarium oxysporum (Fusarium vascular wilt).